Reading from the N-terminus, the 152-residue chain is MGNIVYFSSVSENTHRFVEKLELPATRIPILGRIQDPDFVREPYVLVLPTYGGGHANGPDPDAGGYVPKQVIAFLNNEHNRSLIRGVIAAGNTNFGAEFGYAGDVVSRKCGVPYLYRFELMGTTDDVLAVRAGLENFWKEQTCHPPSQLQSL.

This sequence belongs to the NrdI family.

Probably involved in ribonucleotide reductase function. This is Protein NrdI from Mycobacterium sp. (strain JLS).